We begin with the raw amino-acid sequence, 195 residues long: PRELI domain containing protein 3B (195 aa).

The 172-residue stretch at Met-1–Glu-172 folds into the PRELI/MSF1 domain. Phosphoserine is present on residues Ser-46 and Ser-51.

Belongs to the slowmo family.

The sequence is that of PRELI domain containing protein 3B (Prelid3b) from Mus musculus (Mouse).